A 360-amino-acid chain; its full sequence is MPKKILFTGGGTVGHVTLNLILIPKFIKDGWEVHYIGDKNGIEHTEIEKSGLDVTFHAIATGKLRRYFSWQNLADVFKVALGLLQSLFIVAKLRPQALFSKGGFVSVPPVVAAKLLGKPVFIHESDRSMGLANKIAYKFATTMYTTFEQEDQLSKVKHLGAVTKVFKDANQMPESTQLEAVKEYFSRDLKTLLFIGGSAGAHVFNQFISDHPELKQRYNIINITGDPHLNELSSHLYRVDYVTDLYQPLMAMADLVVTRGGSNTLFELLAMAKLHLIVPLGKEASRGDQLENATYFEKRGYAKQLQEPDLTLHNFDQAMADLFEHQADYEATMLATKEIQSPDFFYDLLRADISSAIKEK.

The UDP-N-acetyl-alpha-D-glucosamine site is built by S198 and Q289.

This sequence belongs to the glycosyltransferase 28 family. MurG subfamily.

Its subcellular location is the cell membrane. The enzyme catalyses Mur2Ac(oyl-L-Ala-gamma-D-Glu-L-Lys-D-Ala-D-Ala)-di-trans,octa-cis-undecaprenyl diphosphate + UDP-N-acetyl-alpha-D-glucosamine = beta-D-GlcNAc-(1-&gt;4)-Mur2Ac(oyl-L-Ala-gamma-D-Glu-L-Lys-D-Ala-D-Ala)-di-trans,octa-cis-undecaprenyl diphosphate + UDP + H(+). Its pathway is cell wall biogenesis; peptidoglycan biosynthesis. Cell wall formation. Catalyzes the transfer of a GlcNAc subunit on undecaprenyl-pyrophosphoryl-MurNAc-pentapeptide (lipid intermediate I) to form undecaprenyl-pyrophosphoryl-MurNAc-(pentapeptide)GlcNAc (lipid intermediate II). The protein is UDP-N-acetylglucosamine--N-acetylmuramyl-(pentapeptide) pyrophosphoryl-undecaprenol N-acetylglucosamine transferase of Streptococcus pyogenes serotype M18 (strain MGAS8232).